Reading from the N-terminus, the 410-residue chain is Phospho-N-acetylmuramoyl-pentapeptide-transferase (410 aa).

Transmembrane regions (helical) follow at residues 23-43 (YITFRSALAFMLSLLLSTIYG), 73-93 (TPTMGGLIIIFATLVPVFLFA), 96-116 (HNIYIVLLIVTTLWMGTIGFV), 132-152 (GIFKVIGQVGLGIIVGAVLYF), 215-235 (WAWLVFIPVVIFIITAVSNGA), 248-268 (TSAVSVLALGIFTFVSGNIIF), 285-305 (VFISAFVGALIGFLWYNSFPA), 307-327 (VFMGDTGSLTIGGIIAVLAIA), 332-352 (ILIVLFCGIFLAESASVIIQV), and 387-407 (KIVTRFWIVAVMLAILSIVTL).

Belongs to the glycosyltransferase 4 family. MraY subfamily. Requires Mg(2+) as cofactor.

Its subcellular location is the cell inner membrane. The enzyme catalyses UDP-N-acetyl-alpha-D-muramoyl-L-alanyl-gamma-D-glutamyl-meso-2,6-diaminopimeloyl-D-alanyl-D-alanine + di-trans,octa-cis-undecaprenyl phosphate = di-trans,octa-cis-undecaprenyl diphospho-N-acetyl-alpha-D-muramoyl-L-alanyl-D-glutamyl-meso-2,6-diaminopimeloyl-D-alanyl-D-alanine + UMP. The protein operates within cell wall biogenesis; peptidoglycan biosynthesis. Functionally, catalyzes the initial step of the lipid cycle reactions in the biosynthesis of the cell wall peptidoglycan: transfers peptidoglycan precursor phospho-MurNAc-pentapeptide from UDP-MurNAc-pentapeptide onto the lipid carrier undecaprenyl phosphate, yielding undecaprenyl-pyrophosphoryl-MurNAc-pentapeptide, known as lipid I. The polypeptide is Phospho-N-acetylmuramoyl-pentapeptide-transferase (Flavobacterium johnsoniae (strain ATCC 17061 / DSM 2064 / JCM 8514 / BCRC 14874 / CCUG 350202 / NBRC 14942 / NCIMB 11054 / UW101) (Cytophaga johnsonae)).